A 312-amino-acid chain; its full sequence is Methionyl-tRNA formyltransferase (312 aa).

Position 112–115 (112–115) interacts with (6S)-5,6,7,8-tetrahydrofolate; it reads SLLP.

The protein belongs to the Fmt family.

The enzyme catalyses L-methionyl-tRNA(fMet) + (6R)-10-formyltetrahydrofolate = N-formyl-L-methionyl-tRNA(fMet) + (6S)-5,6,7,8-tetrahydrofolate + H(+). Attaches a formyl group to the free amino group of methionyl-tRNA(fMet). The formyl group appears to play a dual role in the initiator identity of N-formylmethionyl-tRNA by promoting its recognition by IF2 and preventing the misappropriation of this tRNA by the elongation apparatus. The protein is Methionyl-tRNA formyltransferase of Dehalococcoides mccartyi (strain CBDB1).